Here is a 156-residue protein sequence, read N- to C-terminus: ATP synthase subunit b (156 aa).

Residues 5–27 (ITLIGQMITFAIFVGFTMKFVWP) form a helical membrane-spanning segment.

This sequence belongs to the ATPase B chain family. As to quaternary structure, F-type ATPases have 2 components, F(1) - the catalytic core - and F(0) - the membrane proton channel. F(1) has five subunits: alpha(3), beta(3), gamma(1), delta(1), epsilon(1). F(0) has three main subunits: a(1), b(2) and c(10-14). The alpha and beta chains form an alternating ring which encloses part of the gamma chain. F(1) is attached to F(0) by a central stalk formed by the gamma and epsilon chains, while a peripheral stalk is formed by the delta and b chains.

Its subcellular location is the cell inner membrane. F(1)F(0) ATP synthase produces ATP from ADP in the presence of a proton or sodium gradient. F-type ATPases consist of two structural domains, F(1) containing the extramembraneous catalytic core and F(0) containing the membrane proton channel, linked together by a central stalk and a peripheral stalk. During catalysis, ATP synthesis in the catalytic domain of F(1) is coupled via a rotary mechanism of the central stalk subunits to proton translocation. Functionally, component of the F(0) channel, it forms part of the peripheral stalk, linking F(1) to F(0). The chain is ATP synthase subunit b from Francisella philomiragia subsp. philomiragia (strain ATCC 25017 / CCUG 19701 / FSC 153 / O#319-036).